Here is a 130-residue protein sequence, read N- to C-terminus: Small ribosomal subunit protein uS9 (130 aa).

It belongs to the universal ribosomal protein uS9 family.

The sequence is that of Small ribosomal subunit protein uS9 from Polaromonas naphthalenivorans (strain CJ2).